Reading from the N-terminus, the 248-residue chain is Probable transcriptional regulatory protein FTW_1073 (248 aa).

This sequence belongs to the TACO1 family.

The protein localises to the cytoplasm. This Francisella tularensis subsp. tularensis (strain WY96-3418) protein is Probable transcriptional regulatory protein FTW_1073.